A 186-amino-acid polypeptide reads, in one-letter code: Phosphopantetheine adenylyltransferase (186 aa).

Residue Thr-14 coordinates substrate. Residues 14–15 and His-22 contribute to the ATP site; that span reads TF. Residues Lys-46, Leu-78, and Arg-92 each contribute to the substrate site. Residues 93–95, Glu-103, and 128–134 each bind ATP; these read GLR and WLYISST.

This sequence belongs to the bacterial CoaD family. In terms of assembly, homohexamer. Mg(2+) is required as a cofactor.

The protein localises to the cytoplasm. The enzyme catalyses (R)-4'-phosphopantetheine + ATP + H(+) = 3'-dephospho-CoA + diphosphate. It functions in the pathway cofactor biosynthesis; coenzyme A biosynthesis; CoA from (R)-pantothenate: step 4/5. Reversibly transfers an adenylyl group from ATP to 4'-phosphopantetheine, yielding dephospho-CoA (dPCoA) and pyrophosphate. The protein is Phosphopantetheine adenylyltransferase of Nitratidesulfovibrio vulgaris (strain ATCC 29579 / DSM 644 / CCUG 34227 / NCIMB 8303 / VKM B-1760 / Hildenborough) (Desulfovibrio vulgaris).